The primary structure comprises 450 residues: N-lysine methyltransferase SETD6 (450 aa).

Residues 1 to 10 (MATQAKRRRV) are compositionally biased toward basic residues. A disordered region spans residues 1 to 20 (MATQAKRRRVAGPAGSDDDP). The 225-residue stretch at 39–263 (PKVAVSRQGT…KGHEIFNTYG (225 aa)) folds into the SET domain. K40 carries the post-translational modification N6-methylated lysine; by autocatalysis. 50–52 (AGY) provides a ligand contact to S-adenosyl-L-methionine. W99 provides a ligand contact to substrate. An N6-methylated lysine; by autocatalysis modification is found at K156. Y200 provides a ligand contact to S-adenosyl-L-methionine. S201 and Q203 together coordinate substrate. S-adenosyl-L-methionine-binding positions include 228 to 229 (NH) and Y274. Position 349 is an N6-methylated lysine; by autocatalysis (K349).

This sequence belongs to the class V-like SAM-binding methyltransferase superfamily. Histone-lysine methyltransferase family. SETD6 subfamily. As to quaternary structure, monomer, homodimer and homotrimer; these structures are stabilized in the presence of S-adenosyl-L-methionine (SAM). Automethylated.

The protein resides in the nucleus. It catalyses the reaction L-lysyl-[protein] + S-adenosyl-L-methionine = N(6)-methyl-L-lysyl-[protein] + S-adenosyl-L-homocysteine + H(+). The enzyme catalyses L-lysyl(8)-[histone H2AZ] + S-adenosyl-L-methionine = N(6)-methyl-L-lysyl(8)-[histone H2AZ] + S-adenosyl-L-homocysteine + H(+). Functionally, protein-lysine N-methyltransferase. Monomethylates 'Lys-310' of the RELA subunit of NF-kappa-B complex, leading to down-regulation of NF-kappa-B transcription factor activity. Monomethylates 'Lys-8' of H2AZ (H2AZK8me1). Required for the maintenance of embryonic stem cell self-renewal. Methylates PAK4. This Bos taurus (Bovine) protein is N-lysine methyltransferase SETD6 (SETD6).